The following is a 506-amino-acid chain: Xaa-Pro aminopeptidase 3 (506 aa).

Residues 1 to 31 constitute a mitochondrion transit peptide; it reads MLSLLSTPRLVPVIARLRGLSGCMSCLQRRY. The interval 54 to 79 is interaction with TNFRSF1B; that stretch reads HPHLLRPGEVTPGLSQVEYALRRHKL. Substrate is bound by residues tyrosine 300, aspartate 331, aspartate 342, histidine 423, histidine 430, glutamate 450, and glutamate 474. 3 residues coordinate Mn(2+): aspartate 331, aspartate 342, and histidine 423. Glutamate 450 and glutamate 474 together coordinate Mn(2+).

The protein belongs to the peptidase M24B family. Homodimer. Interacts with TNFRSF1B/TNFR2 (activated) and TRAF2. Requires Mn(2+) as cofactor. As to expression, expressed in the kidney, specifically in intercalated cells, but not in principal cells, of the distal convoluted tubule and cortical collecting duct (at protein level).

The protein resides in the mitochondrion. Its subcellular location is the cytoplasm. It carries out the reaction Release of any N-terminal amino acid, including proline, that is linked to proline, even from a dipeptide or tripeptide.. Its function is as follows. Catalyzes the removal of a penultimate prolyl residue from the N-termini of peptides, such as Leu-Pro-Ala. Also shows low activity towards peptides with Ala or Ser at the P1 position. Promotes TNFRSF1B-mediated phosphorylation of MAPK8/JNK1 and MAPK9/JNK2, suggesting a function as an adapter protein for TNFRSF1B; the effect is independent of XPNPEP3 peptidase activity. May inhibit apoptotic cell death induced via TNF-TNFRSF1B signaling. This Rattus norvegicus (Rat) protein is Xaa-Pro aminopeptidase 3 (Xpnpep3).